A 202-amino-acid chain; its full sequence is Oligoribonuclease (202 aa).

One can recognise an Exonuclease domain in the interval 2-166; it reads LVWIDCEMTG…ADIQESIEEL (165 aa). The active site involves tyrosine 123.

The protein belongs to the oligoribonuclease family.

It localises to the cytoplasm. Its function is as follows. 3'-to-5' exoribonuclease specific for small oligoribonucleotides. The chain is Oligoribonuclease from Cutibacterium acnes (strain DSM 16379 / KPA171202) (Propionibacterium acnes).